Here is a 318-residue protein sequence, read N- to C-terminus: Aspartate carbamoyltransferase catalytic subunit (318 aa).

Residues arginine 59 and threonine 60 each coordinate carbamoyl phosphate. L-aspartate is bound at residue lysine 87. Positions 109, 137, and 140 each coordinate carbamoyl phosphate. Residues arginine 170 and arginine 224 each contribute to the L-aspartate site. Residues glycine 265 and proline 266 each coordinate carbamoyl phosphate.

This sequence belongs to the aspartate/ornithine carbamoyltransferase superfamily. ATCase family. As to quaternary structure, heterododecamer (2C3:3R2) of six catalytic PyrB chains organized as two trimers (C3), and six regulatory PyrI chains organized as three dimers (R2).

The catalysed reaction is carbamoyl phosphate + L-aspartate = N-carbamoyl-L-aspartate + phosphate + H(+). It participates in pyrimidine metabolism; UMP biosynthesis via de novo pathway; (S)-dihydroorotate from bicarbonate: step 2/3. Functionally, catalyzes the condensation of carbamoyl phosphate and aspartate to form carbamoyl aspartate and inorganic phosphate, the committed step in the de novo pyrimidine nucleotide biosynthesis pathway. The chain is Aspartate carbamoyltransferase catalytic subunit from Rhizobium rhizogenes (strain K84 / ATCC BAA-868) (Agrobacterium radiobacter).